A 393-amino-acid polypeptide reads, in one-letter code: NAD(P)H-quinone oxidoreductase subunit H, chloroplastic (393 aa).

The protein belongs to the complex I 49 kDa subunit family. As to quaternary structure, NDH is composed of at least 16 different subunits, 5 of which are encoded in the nucleus.

Its subcellular location is the plastid. It is found in the chloroplast thylakoid membrane. It catalyses the reaction a plastoquinone + NADH + (n+1) H(+)(in) = a plastoquinol + NAD(+) + n H(+)(out). The enzyme catalyses a plastoquinone + NADPH + (n+1) H(+)(in) = a plastoquinol + NADP(+) + n H(+)(out). Its function is as follows. NDH shuttles electrons from NAD(P)H:plastoquinone, via FMN and iron-sulfur (Fe-S) centers, to quinones in the photosynthetic chain and possibly in a chloroplast respiratory chain. The immediate electron acceptor for the enzyme in this species is believed to be plastoquinone. Couples the redox reaction to proton translocation, and thus conserves the redox energy in a proton gradient. The chain is NAD(P)H-quinone oxidoreductase subunit H, chloroplastic from Angiopteris evecta (Mule's foot fern).